The following is a 630-amino-acid chain: Beta-phellandrene synthase, chloroplastic (630 aa).

A chloroplast-targeting transit peptide spans 1–48 (MALVSSAPKSCLHKSLIRSTHHELKPLRRTIPTLGMCRRGKSFTPSVS). Mg(2+) is bound by residues aspartate 381, aspartate 385, and aspartate 533. The short motif at 381–385 (DDIYD) is the DDXXD motif element.

The protein belongs to the terpene synthase family. Tpsd subfamily. The cofactor is Mg(2+). Mn(2+) is required as a cofactor. Requires K(+) as cofactor.

The protein resides in the plastid. The protein localises to the chloroplast. It catalyses the reaction (2E)-geranyl diphosphate = (-)-beta-phellandrene + diphosphate. It functions in the pathway terpene metabolism; oleoresin biosynthesis. Converts geranyl diphosphate to four products with (-)-(4S)-beta-phellandrene (52%) as the major olefin, and lesser amounts of (-)-(1S,5S)-beta-pinene (34%), (-)-1S,5S-alpha-pinene (8.5%), and (-)-(4S)-limonene (6%). Involved in defensive oleoresin formation in conifers in response to insect attack or other injury. Involved in monoterpene (C10) olefins biosynthesis. In Abies grandis (Grand fir), this protein is Beta-phellandrene synthase, chloroplastic (ag8).